Consider the following 234-residue polypeptide: Carbohydrate deacetylase (234 aa).

2 residues coordinate Mg(2+): histidine 60 and histidine 123.

Belongs to the YdjC deacetylase family. Requires Mg(2+) as cofactor.

Probably catalyzes the deacetylation of acetylated carbohydrates an important step in the degradation of oligosaccharides. The protein is Carbohydrate deacetylase of Bacillus anthracis.